The chain runs to 101 residues: Integration host factor subunit beta (101 aa).

Belongs to the bacterial histone-like protein family. In terms of assembly, heterodimer of an alpha and a beta chain.

Its function is as follows. This protein is one of the two subunits of integration host factor, a specific DNA-binding protein that functions in genetic recombination as well as in transcriptional and translational control. The chain is Integration host factor subunit beta from Nitrobacter hamburgensis (strain DSM 10229 / NCIMB 13809 / X14).